We begin with the raw amino-acid sequence, 446 residues long: Glutamine synthetase (446 aa).

Positions 14-107 (NNVKFLRFQF…IICDVYRKNG (94 aa)) constitute a GS beta-grasp domain. The region spanning 114-446 (PRGCLKRVLA…DWEFNKYVRI (333 aa)) is the GS catalytic domain. Positions 138 and 140 each coordinate Mg(2+). ATP is bound at residue Glu187. Mg(2+)-binding residues include Glu192 and Glu199. L-glutamate is bound by residues 243–244 (NG) and Gly244. A Mg(2+)-binding site is contributed by His248. Residue Ser252 participates in ATP binding. L-glutamate contacts are provided by Arg301, Glu307, and Arg319. Positions 319, 324, and 331 each coordinate ATP. Glu336 contributes to the Mg(2+) binding site. An L-glutamate-binding site is contributed by Arg338.

Belongs to the glutamine synthetase family. Oligomer of 12 subunits arranged in the form of two hexagons. The cofactor is Mg(2+).

It localises to the cytoplasm. The enzyme catalyses L-glutamate + NH4(+) + ATP = L-glutamine + ADP + phosphate + H(+). Its function is as follows. Probably involved in nitrogen metabolism via ammonium assimilation. Catalyzes the ATP-dependent biosynthesis of glutamine from glutamate and ammonia. In Methanococcus voltae, this protein is Glutamine synthetase.